A 210-amino-acid polypeptide reads, in one-letter code: Adenylate kinase (210 aa).

An ATP-binding site is contributed by 10 to 15 (GSGKGT). The segment at 30 to 54 (SCGDILRKQNKCCDINKLIKKGELI) is NMP. AMP contacts are provided by residues Arg36, 52-54 (ELI), 80-83 (GFPR), and Gln87. The segment at 117–154 (GRIIDKVSGEIYHLKFNPPKFITEKSNKNKILVRRLDD) is LID. Residues Arg118 and 127 to 128 (IY) contribute to the ATP site. Positions 151 and 162 each coordinate AMP. Phe195 serves as a coordination point for ATP.

It belongs to the adenylate kinase family. Monomer.

It localises to the cytoplasm. It carries out the reaction AMP + ATP = 2 ADP. It functions in the pathway purine metabolism; AMP biosynthesis via salvage pathway; AMP from ADP: step 1/1. Its function is as follows. Catalyzes the reversible transfer of the terminal phosphate group between ATP and AMP. Plays an important role in cellular energy homeostasis and in adenine nucleotide metabolism. The polypeptide is Adenylate kinase (Wigglesworthia glossinidia brevipalpis).